Here is a 145-residue protein sequence, read N- to C-terminus: D-aminoacyl-tRNA deacylase (145 aa).

The short motif at 137 to 138 (GP) is the Gly-cisPro motif, important for rejection of L-amino acids element.

The protein belongs to the DTD family. In terms of assembly, homodimer.

The protein localises to the cytoplasm. It carries out the reaction glycyl-tRNA(Ala) + H2O = tRNA(Ala) + glycine + H(+). The catalysed reaction is a D-aminoacyl-tRNA + H2O = a tRNA + a D-alpha-amino acid + H(+). An aminoacyl-tRNA editing enzyme that deacylates mischarged D-aminoacyl-tRNAs. Also deacylates mischarged glycyl-tRNA(Ala), protecting cells against glycine mischarging by AlaRS. Acts via tRNA-based rather than protein-based catalysis; rejects L-amino acids rather than detecting D-amino acids in the active site. By recycling D-aminoacyl-tRNA to D-amino acids and free tRNA molecules, this enzyme counteracts the toxicity associated with the formation of D-aminoacyl-tRNA entities in vivo and helps enforce protein L-homochirality. The chain is D-aminoacyl-tRNA deacylase from Aeromonas hydrophila subsp. hydrophila (strain ATCC 7966 / DSM 30187 / BCRC 13018 / CCUG 14551 / JCM 1027 / KCTC 2358 / NCIMB 9240 / NCTC 8049).